Reading from the N-terminus, the 434-residue chain is Prenyltransferase fogH (434 aa).

Glu86 provides a ligand contact to L-tryptophan. Positions 101, 248, 250, 252, and 346 each coordinate substrate.

The protein belongs to the tryptophan dimethylallyltransferase family.

The protein operates within secondary metabolite biosynthesis. Functionally, prenyltransferase; part of the gene cluster that mediates the biosynthesis of flavoglaucin and congeners (including aspergin, dihydroauroglaucin and auroglaucin), prenylated salicylaldehyde derivatives carrying a saturated or an unsaturated C-7 side chain. The PKS fogA releases the carboxylic acid (8E,10E,12E)-3,5,7-trihydroxytetradeca-8,10,12-trienoic acid as its product, as well as derivatives with one and two double bonds. FogA is indeed able to reduce the initial triketide, thus being at least partially responsible for the differently saturated heptyl side chains of flavoglaucin congeners. The oxidoreductases fogB, fogC and fogD modify the nascent polyketide in fogA-bound form and, together, fogA, fogB, fogC and fogD are necessary for the formation of the aromatic core and the cyclized PKS products are released as salicyl alcohols. In particular, fogB is responsible for oxidation of a hydroxyl group or reduction of remaining double bond(s) at the C-7 residue whereas fogD is probably involved in the reductive release of the modified PKS products. The cytochrome P450 monooxygenase fogE is then responsible for the hydroxylation at C-3 of the benzene ring. The fogE products are substrates of the prenyltransferase fogH and the prenylated benzyl alcohols are subsequently oxidized by the fogF to produce the final aryl aldehydes flavoglaucin and congeners. The short-chain dehydrogenase fogG does not seem to be involved in the biosynthesis of the prenylated salicylaldehyde derivatives. The chain is Prenyltransferase fogH from Aspergillus ruber (strain CBS 135680).